The chain runs to 110 residues: Protein ripply3 (110 aa).

A WRPW motif motif is present at residues 18 to 21 (WRPW). A ripply homology domain region spans residues 50 to 85 (HPVRLFLPRSRMQEYLSRLGSSVLASFPVQATLHFY). Residues 87-99 (DEDSSSEEEEDEE) are compositionally biased toward acidic residues. The disordered stretch occupies residues 87–110 (DEDSSSEEEEDEEHANTRCRLWRP).

This sequence belongs to the ripply family.

It localises to the nucleus. Probable transcriptional regulator involved in developmental processes. The sequence is that of Protein ripply3 (ripply3) from Danio rerio (Zebrafish).